The chain runs to 267 residues: Phosphoinositide-3-kinase-interacting protein 1 (267 aa).

The signal sequence occupies residues 1–21 (MLLAWVHTFLLSNMLLAEAYG). The Extracellular segment spans residues 22 to 172 (SGGCFWDNGH…NSKEKKDLGT (151 aa)). The region spanning 24 to 101 (GCFWDNGHLY…EKRPCEDLRC (78 aa)) is the Kringle domain. 3 disulfide bridges follow: C25–C101, C46–C82, and C70–C96. The span at 91–101 (PEKRPCEDLRC) shows a compositional bias: basic and acidic residues. Positions 91 to 122 (PEKRPCEDLRCPETTSQAPPPPPPSSTTELEE) are disordered. Residues 173–193 (LGYVLGVTMTVIIIAIGVGIV) traverse the membrane as a helical segment. Over 194 to 267 (LGYTYKRGKD…LTDQAGTPGA (74 aa)) the chain is Cytoplasmic.

The protein localises to the cell membrane. Negative regulator of hepatic phosphatidylinositol 3-kinase (PI3K) activity. This Rattus norvegicus (Rat) protein is Phosphoinositide-3-kinase-interacting protein 1 (Pik3ip1).